A 132-amino-acid chain; its full sequence is MNENIISNLNYFSEITQRTLSAFHFSGTDSTLEDEVEELKRFVSKNRFKKLIKIDILDDNRYCRHFSDGSKDIVDEEDINTKVAYDKNELFEVIDRALSKDISPIMSIKLSRNIQLVENKKIENPSEKIFFL.

Functionally, the presence of the two linear plasmids, termed pGKL1 and pGKL2, in strains of Kluyveromyces lactis confers the killer phenotype to the host cell, by promoting the secretion of a toxin able to inhibit the growth of sensitive strains. This is an uncharacterized protein from Kluyveromyces lactis (strain ATCC 8585 / CBS 2359 / DSM 70799 / NBRC 1267 / NRRL Y-1140 / WM37) (Yeast).